We begin with the raw amino-acid sequence, 257 residues long: Transmembrane protein 101 (257 aa).

Helical transmembrane passes span 24 to 40, 52 to 72, 77 to 97, 110 to 130, 139 to 159, 182 to 202, 206 to 226, and 233 to 253; these read TRCP…LYAE, VPYL…MSFG, WFAL…YIGG, YSRT…AGEL, SLQS…AYSL, LFFV…YVTL, ILAV…SYWH, and FWNQ…AVIL.

Its subcellular location is the membrane. In terms of biological role, may activate NF-kappa-B signaling pathways. This is Transmembrane protein 101 (Tmem101) from Mus musculus (Mouse).